Reading from the N-terminus, the 221-residue chain is Oxaloacetate tautomerase FAHD1, mitochondrial (221 aa).

Residues 1–24 (MASTKPLSRFWEWGKNIVCVGRNY) constitute a mitochondrion transit peptide. Oxalate is bound at residue Arg-22. Phosphoserine is present on Ser-37. The Mg(2+) site is built by Glu-68, Glu-70, and Asp-99. An N6-acetyllysine modification is found at Lys-110. Lys-112 carries the post-translational modification N6-succinyllysine. Lys-120 lines the oxalate pocket.

It belongs to the FAH family. Homodimer. Mg(2+) serves as cofactor. Mn(2+) is required as a cofactor. As to expression, ubiquitous with higher expression in the liver and the kidney (at protein level).

It is found in the mitochondrion. The protein resides in the cytoplasm. The protein localises to the cytosol. The catalysed reaction is oxaloacetate = enol-oxaloacetate. It catalyses the reaction oxaloacetate + H(+) = pyruvate + CO2. It carries out the reaction a 3-acylpyruvate + H2O = a carboxylate + pyruvate + H(+). The enzyme catalyses acetylpyruvate + H2O = acetate + pyruvate + H(+). The catalysed reaction is 3-fumarylpyruvate + H2O = fumarate + pyruvate + H(+). Its activity is regulated as follows. Oxaloacetate decarboxylation is potently and competitively inhibited by oxalate. Its function is as follows. Tautomerase that converts enol-oxaloacetate, a strong inhibitor of succinate dehydrogenase, to the physiological keto form of oxaloacetate. It is thereby required to maximize aerobic respiration efficiency by preventing succinate dehydrogenase inhibition. Also acts as a weak oxaloacetate decarboxylase (ODx), catalyzing the decarboxylation of oxaloacetate (OAA) to pyruvate and CO(2), and as such is likely a regulatory enzyme in the TCA cycle. Also displays acylpyruvase activity, being able to hydrolyze acetylpyruvate and fumarylpyruvate in vitro. This is Oxaloacetate tautomerase FAHD1, mitochondrial from Mus musculus (Mouse).